The following is a 445-amino-acid chain: Alkylglycerol monooxygenase (445 aa).

2 consecutive transmembrane segments (helical) span residues 43–63 and 111–131; these read ATPF…ILKG and WDSP…YYWF. The 130-residue stretch at 120–249 folds into the Fatty acid hydroxylase domain; that stretch reads AFLGVDFGYY…LIIWDKIFGT (130 aa). Positions 132-136 match the Histidine box-1 motif; sequence HRMAH. Residues 145 to 149 carry the Histidine box-2 motif; the sequence is HQTHH. Residues 221–225 carry the Histidine box-3 motif; the sequence is HRVHH. Helical transmembrane passes span 334 to 354, 363 to 383, and 413 to 433; these read LLKI…EETF, VTLL…GFLL, and VPSL…FWGV.

It belongs to the sterol desaturase family. TMEM195 subfamily. It depends on Fe cation as a cofactor.

The protein resides in the endoplasmic reticulum membrane. It catalyses the reaction 1-O-(1,2-saturated-alkyl)-sn-glycerol + (6R)-L-erythro-5,6,7,8-tetrahydrobiopterin + O2 = a 1-(1-hydroxyalkyl)-sn-glycerol + (6R)-L-erythro-6,7-dihydrobiopterin + H2O. Its function is as follows. Glyceryl-ether monooxygenase that cleaves the O-alkyl bond of ether lipids. Ether lipids are essential components of brain membranes. The sequence is that of Alkylglycerol monooxygenase (AGMO) from Homo sapiens (Human).